We begin with the raw amino-acid sequence, 162 residues long: Caveolin-2 (162 aa).

Residues 1–86 (MGLETEKADV…FEISKYVIYK (86 aa)) lie on the Cytoplasmic side of the membrane. Phosphotyrosine; by SRC is present on Tyr-19. Residues Ser-20 and Ser-23 each carry the phosphoserine modification. Tyr-27 carries the phosphotyrosine; by SRC modification. Ser-36 carries the post-translational modification Phosphoserine. Positions 87 to 107 (FLTLFLAIPLAFAAGILFATL) form an intramembrane region, helical. Residues 108–162 (SCLHIWIIMPFVKTCLMVLPSVQTIWKSITDVVIAPLCTSVGRSFSSVSLQLSHD) lie on the Cytoplasmic side of the membrane.

The protein belongs to the caveolin family. As to quaternary structure, monomer or homodimer. Interacts with CAV1; the interaction forms a stable heterooligomeric complex that is required for targeting to lipid rafts and for caveolae formation. Tyrosine phosphorylated forms do not form heterooligomers with the Tyr-19-phosphorylated form existing as a monomer or dimer, and the Tyr-27-form as a monomer only. Interacts (tyrosine phosphorylated form) with the SH2 domain-containing proteins, RASA1, NCK1 and SRC. Interacts (tyrosine phosphorylated form) with INSR, the interaction (Tyr-27-phosphorylated form) is increased on insulin stimulation. Interacts (Tyr-19 phosphorylated form) with MAPK1 (phosphorylated form); the interaction, promoted by insulin, leads to nuclear location and MAPK1 activation. Interacts with STAT3; the interaction is increased on insulin-induced tyrosine phosphorylation leading to STAT activation. Phosphorylated on serine and tyrosine residues. CAV1 promotes phosphorylation on Ser-23 which then targets the complex to the plasma membrane, lipid rafts and caveolae. Phosphorylation on Ser-36 appears to modulate mitosis in endothelial cells. Phosphorylation on both Tyr-19 and Tyr-27 is required for insulin-induced 'Ser-727' phosphorylation of STAT3 and its activation. Phosphorylation on Tyr-19 is required for insulin-induced phosphorylation of MAPK1 and DNA binding of STAT3. Tyrosine phosphorylation is induced by both EGF and insulin (By. similarity).

The protein resides in the nucleus. The protein localises to the cytoplasm. It is found in the golgi apparatus membrane. Its subcellular location is the cell membrane. It localises to the membrane. The protein resides in the caveola. May act as a scaffolding protein within caveolar membranes. Interacts directly with G-protein alpha subunits and can functionally regulate their activity. Acts as an accessory protein in conjunction with CAV1 in targeting to lipid rafts and driving caveolae formation. The Ser-36 phosphorylated form has a role in modulating mitosis in endothelial cells. Positive regulator of cellular mitogenesis of the MAPK signaling pathway. Required for the insulin-stimulated nuclear translocation and activation of MAPK1 and STAT3, and the subsequent regulation of cell cycle progression. This is Caveolin-2 (CAV2) from Neofelis nebulosa (Clouded leopard).